We begin with the raw amino-acid sequence, 314 residues long: tRNA dimethylallyltransferase 2 (314 aa).

Residue 8–15 (GPTGSGKS) coordinates ATP. 10–15 (TGSGKS) contacts substrate.

This sequence belongs to the IPP transferase family. Monomer. Mg(2+) serves as cofactor.

The catalysed reaction is adenosine(37) in tRNA + dimethylallyl diphosphate = N(6)-dimethylallyladenosine(37) in tRNA + diphosphate. Functionally, catalyzes the transfer of a dimethylallyl group onto the adenine at position 37 in tRNAs that read codons beginning with uridine, leading to the formation of N6-(dimethylallyl)adenosine (i(6)A). The polypeptide is tRNA dimethylallyltransferase 2 (Mycobacterium marinum (strain ATCC BAA-535 / M)).